Consider the following 500-residue polypeptide: Potassium/proton antiporter CemA (500 aa).

A helical transmembrane segment spans residues 129-149 (LFLTTIKTIFILFFVPFLVNF). The insert stretch occupies residues 204 to 354 (HQTHRDSKPL…GSLDSIKNKD (151 aa)). The next 3 membrane-spanning stretches (helical) occupy residues 378 to 398 (ITNF…LITL), 425 to 445 (ILLI…ELFF), and 461 to 481 (IFLL…YLIF).

It belongs to the CemA family.

It localises to the plastid. The protein resides in the chloroplast inner membrane. The enzyme catalyses K(+)(in) + H(+)(out) = K(+)(out) + H(+)(in). Contributes to K(+)/H(+) antiport activity by supporting proton efflux to control proton extrusion and homeostasis in chloroplasts in a light-dependent manner to modulate photosynthesis. Prevents excessive induction of non-photochemical quenching (NPQ) under continuous-light conditions. Indirectly promotes efficient inorganic carbon uptake into chloroplasts. The chain is Potassium/proton antiporter CemA from Chlamydomonas reinhardtii (Chlamydomonas smithii).